The primary structure comprises 582 residues: Leucine-rich repeat transmembrane neuronal protein 3 (582 aa).

The signal sequence occupies residues 1-30; the sequence is MGFNVIRLLRGSAVAVVLAPTVLLTMLSSA. Positions 31–61 constitute an LRRNT domain; it reads ERGCPKGCRCEGKMVYCESQKLQEIPSSISA. Residues 31–420 lie on the Extracellular side of the membrane; the sequence is ERGCPKGCRC…VDTEHISFHK (390 aa). 10 LRR repeats span residues 63 to 83, 86 to 107, 110 to 131, 134 to 155, 158 to 179, 182 to 203, 206 to 226, 230 to 251, 254 to 275, and 279 to 300; these read CLGL…QFKG, QLTW…AFNG, RLKE…TFRP, NLRN…QFRG, KLLS…IFQD, NLEL…VFAG, RLKE…ALFP, SLQN…MSWT, SLQR…SVFQ, and NLQR…ILDS. N-linked (GlcNAc...) asparagine glycosylation occurs at Asn-126. The LRRCT domain maps to 312 to 363; it reads NIWECSRNICSLVNWLRSFKGLRENTIICASPKELQGVNVIDAVKNYSICGK. A glycan (N-linked (GlcNAc...) asparagine) is linked at Asn-357. Residues 378-410 are disordered; the sequence is KPTFKPKLPRPKHESKPPLPPTVGATEPSPETD. A helical membrane pass occupies residues 421–441; it reads IIAGSVALFLSVLVILLVMYV. Residues 442–582 lie on the Cytoplasmic side of the membrane; it reads SWKRYPASMK…RISDHKPQLA (141 aa).

The protein belongs to the LRRTM family. Expressed in neuronal tissues.

Its subcellular location is the cell membrane. The protein resides in the postsynaptic cell membrane. Its function is as follows. May play a role in the development and maintenance of the vertebrate nervous system. Exhibits a limited synaptogenic activity in vitro, restricted to excitatory presynaptic differentiation. The polypeptide is Leucine-rich repeat transmembrane neuronal protein 3 (Lrrtm3) (Mus musculus (Mouse)).